Here is a 331-residue protein sequence, read N- to C-terminus: GTP 3',8-cyclase (331 aa).

In terms of domain architecture, Radical SAM core spans 9–233 (PFGRRITYLR…VRSSKVTGGP (225 aa)). Position 18 (Arg18) interacts with GTP. [4Fe-4S] cluster is bound by residues Cys25 and Cys29. Tyr31 contributes to the S-adenosyl-L-methionine binding site. Cys32 contributes to the [4Fe-4S] cluster binding site. Arg67 serves as a coordination point for GTP. Gly71 contacts S-adenosyl-L-methionine. Residue Thr98 coordinates GTP. Ser122 lines the S-adenosyl-L-methionine pocket. Lys159 provides a ligand contact to GTP. Met193 lines the S-adenosyl-L-methionine pocket. [4Fe-4S] cluster is bound by residues Cys257 and Cys260. 262–264 (RVR) serves as a coordination point for GTP. Cys274 provides a ligand contact to [4Fe-4S] cluster.

Belongs to the radical SAM superfamily. MoaA family. As to quaternary structure, monomer and homodimer. The cofactor is [4Fe-4S] cluster.

It carries out the reaction GTP + AH2 + S-adenosyl-L-methionine = (8S)-3',8-cyclo-7,8-dihydroguanosine 5'-triphosphate + 5'-deoxyadenosine + L-methionine + A + H(+). Its pathway is cofactor biosynthesis; molybdopterin biosynthesis. Functionally, catalyzes the cyclization of GTP to (8S)-3',8-cyclo-7,8-dihydroguanosine 5'-triphosphate. The polypeptide is GTP 3',8-cyclase (Ectopseudomonas mendocina (strain ymp) (Pseudomonas mendocina)).